We begin with the raw amino-acid sequence, 330 residues long: Putative glycosyltransferase ORF330 (330 aa).

It belongs to the glycosyltransferase group 1 family. Glycosyltransferase 4 subfamily.

The chain is Putative glycosyltransferase ORF330 from Acidianus filamentous virus 2 (isolate Italy/Pozzuoli) (AFV-2).